Reading from the N-terminus, the 176-residue chain is Cytochrome b (176 aa).

Transmembrane regions (helical) follow at residues 33-53 (FGSLLGLCLLIQILTGLFLAM), 77-98 (WLIRYMHANGASLFFICLFLHV), and 113-133 (WNIGVILLFAVMATAFMGYVL). The heme b site is built by histidine 83 and histidine 97.

The protein belongs to the cytochrome b family. As to quaternary structure, the cytochrome bc1 complex contains 11 subunits: 3 respiratory subunits (MT-CYB, CYC1 and UQCRFS1), 2 core proteins (UQCRC1 and UQCRC2) and 6 low-molecular weight proteins (UQCRH/QCR6, UQCRB/QCR7, UQCRQ/QCR8, UQCR10/QCR9, UQCR11/QCR10 and a cleavage product of UQCRFS1). This cytochrome bc1 complex then forms a dimer. The cofactor is heme b.

The protein localises to the mitochondrion inner membrane. In terms of biological role, component of the ubiquinol-cytochrome c reductase complex (complex III or cytochrome b-c1 complex) that is part of the mitochondrial respiratory chain. The b-c1 complex mediates electron transfer from ubiquinol to cytochrome c. Contributes to the generation of a proton gradient across the mitochondrial membrane that is then used for ATP synthesis. The protein is Cytochrome b (MT-CYB) of Sciurus carolinensis (Eastern gray squirrel).